The sequence spans 466 residues: A-type ATP synthase subunit B (466 aa).

It belongs to the ATPase alpha/beta chains family. Has multiple subunits with at least A(3), B(3), C, D, E, F, H, I and proteolipid K(x).

The protein resides in the cell membrane. Functionally, component of the A-type ATP synthase that produces ATP from ADP in the presence of a proton gradient across the membrane. The B chain is a regulatory subunit. This chain is A-type ATP synthase subunit B, found in Metallosphaera sedula (strain ATCC 51363 / DSM 5348 / JCM 9185 / NBRC 15509 / TH2).